The following is a 238-amino-acid chain: Uridylate kinase (238 aa).

12–15 contacts ATP; that stretch reads KLSG. Residue Gly54 coordinates UMP. The ATP site is built by Gly55 and Arg59. UMP is bound by residues Asp74 and 135 to 142; that span reads TGNPFFTT. Residues Thr162, Tyr168, and Asp171 each coordinate ATP.

Belongs to the UMP kinase family. As to quaternary structure, homohexamer.

Its subcellular location is the cytoplasm. The catalysed reaction is UMP + ATP = UDP + ADP. It participates in pyrimidine metabolism; CTP biosynthesis via de novo pathway; UDP from UMP (UMPK route): step 1/1. With respect to regulation, inhibited by UTP. In terms of biological role, catalyzes the reversible phosphorylation of UMP to UDP. In Bordetella pertussis (strain Tohama I / ATCC BAA-589 / NCTC 13251), this protein is Uridylate kinase.